Reading from the N-terminus, the 274-residue chain is 2,3,4,5-tetrahydropyridine-2,6-dicarboxylate N-succinyltransferase (274 aa).

Substrate-binding residues include Arg-106 and Asp-143.

It belongs to the transferase hexapeptide repeat family. In terms of assembly, homotrimer.

The protein resides in the cytoplasm. It carries out the reaction (S)-2,3,4,5-tetrahydrodipicolinate + succinyl-CoA + H2O = (S)-2-succinylamino-6-oxoheptanedioate + CoA. The protein operates within amino-acid biosynthesis; L-lysine biosynthesis via DAP pathway; LL-2,6-diaminopimelate from (S)-tetrahydrodipicolinate (succinylase route): step 1/3. The chain is 2,3,4,5-tetrahydropyridine-2,6-dicarboxylate N-succinyltransferase from Acidovorax sp. (strain JS42).